The following is a 138-amino-acid chain: Phospholipase A2 group V (138 aa).

The first 20 residues, 1–20 (MKGLLPLAWFLACSVPAVQG), serve as a signal peptide directing secretion. 6 cysteine pairs are disulfide-bonded: cysteine 46–cysteine 137, cysteine 48–cysteine 64, cysteine 63–cysteine 117, cysteine 70–cysteine 110, cysteine 79–cysteine 103, and cysteine 97–cysteine 108. The Ca(2+) site is built by tyrosine 47, glycine 49, and glycine 51. Histidine 67 is a catalytic residue. Position 68 (aspartate 68) interacts with Ca(2+). Aspartate 111 is an active-site residue.

Belongs to the phospholipase A2 family. Ca(2+) serves as cofactor. This enzyme lacks one of the seven disulfide bonds found in similar PLA2 proteins. As to expression, heart, placenta and less abundantly, in lung. Detected in the outer and inner plexiform layers of the retina (at protein level). Expressed in monocytes and macrophages.

It is found in the secreted. The protein resides in the cell membrane. The protein localises to the cytoplasmic vesicle. It localises to the phagosome. Its subcellular location is the recycling endosome. It is found in the golgi apparatus. The protein resides in the cis-Golgi network. The protein localises to the trans-Golgi network. The catalysed reaction is a 1,2-diacyl-sn-glycero-3-phosphocholine + H2O = a 1-acyl-sn-glycero-3-phosphocholine + a fatty acid + H(+). It carries out the reaction 1-hexadecanoyl-2-(9Z-octadecenoyl)-sn-glycero-3-phosphocholine + H2O = 1-hexadecanoyl-sn-glycero-3-phosphocholine + (9Z)-octadecenoate + H(+). It catalyses the reaction 1-hexadecanoyl-2-(5Z,8Z,11Z,14Z-eicosatetraenoyl)-sn-glycero-3-phosphocholine + H2O = 1-hexadecanoyl-sn-glycero-3-phosphocholine + (5Z,8Z,11Z,14Z)-eicosatetraenoate + H(+). The enzyme catalyses 1-hexadecanoyl-2-(9Z,12Z-octadecadienoyl)-sn-glycero-3-phosphoethanolamine + H2O = 1-hexadecanoyl-sn-glycero-3-phosphoethanolamine + (9Z,12Z)-octadecadienoate + H(+). The catalysed reaction is 1-hexadecanoyl-2-(5Z,8Z,11Z,14Z-eicosatetraenoyl)-sn-glycero-3-phosphoethanolamine + H2O = 1-hexadecanoyl-sn-glycero-3-phosphoethanolamine + (5Z,8Z,11Z,14Z)-eicosatetraenoate + H(+). It carries out the reaction 1-octadecanoyl-2-(5Z,8Z,11Z,14Z-eicosatetraenoyl)-sn-glycero-3-phospho-(1D-myo-inositol) + H2O = 1-octadecanoyl-sn-glycero-3-phospho-(1D-myo-inositol) + (5Z,8Z,11Z,14Z)-eicosatetraenoate + H(+). It catalyses the reaction 1-hexadecanoyl-2-(9Z-octadecenoyl)-sn-glycero-3-phosphoglycerol + H2O = 1-hexadecanoyl-sn-glycero-3-phosphoglycerol + (9Z)-octadecenoate + H(+). The enzyme catalyses N-hexadecanoyl-1,2-di-(9Z-octadecenoyl)-sn-glycero-3-phosphoethanolamine + H2O = N-hexadecanoyl-1-(9Z-octadecenoyl)-sn-glycero-3-phosphoethanolamine + (9Z)-octadecenoate + H(+). The catalysed reaction is 1'-[1,2-di-(9Z-octadecenoyl)-sn-glycero-3-phospho]-3'-[1-(9Z-octadecenoyl)-sn-glycero-3-phospho]-glycerol + H2O = 1',3'-bis-[1-(9Z-octadecenoyl)-sn-glycero-3-phospho]-glycerol + (9Z)-octadecenoate + H(+). It carries out the reaction 1',3'-bis[1,2-di-(9Z-octadecenoyl)-sn-glycero-3-phospho]-glycerol + H2O = 1'-[1,2-di-(9Z-octadecenoyl)-sn-glycero-3-phospho]-3'-[1-(9Z-octadecenoyl)-sn-glycero-3-phospho]-glycerol + (9Z)-octadecenoate + H(+). Its pathway is lipid metabolism; phospholipid metabolism. It participates in lipid metabolism; leukotriene B4 biosynthesis. It functions in the pathway lipid metabolism; leukotriene C4 biosynthesis. Activated by cardiolipin. Its function is as follows. Secretory calcium-dependent phospholipase A2 that primarily targets extracellular phospholipids. Hydrolyzes the ester bond of the fatty acyl group attached at sn-2 position of phospholipids (phospholipase A2 activity), preferentially releasing fatty acyl groups with a low degree of unsaturation such as oleoyl (C18:1) and linoleoyl (C18:2) groups. Hydrolyzes low-density lipoprotein (LDL) phospholipids releasing unsaturated fatty acids that drive macrophage polarization toward an M2 phenotype. May act in an autocrine and paracrine manner. Contributes to lipid remodeling of cellular membranes at different subcellular locations and generation of lipid mediators involved in pathogen clearance. Cleaves sn-2 fatty acyl chains of cardiolipin, a major component of the inner membrane of mitochondria and bacterial membranes. Promotes phagocytosis of bacteria in macrophages through production of lysophosphatidylethanolamines. Displays bactericidal activity against Gram-positive bacteria by directly hydrolyzing phospholipids of the bacterial membrane. Promotes phagocytosis and killing of ingested fungi likely through controlling phagosome-lysosome fusion and phagosome maturation. Plays a role in biosynthesis of cysteinyl leukotrienes (CysLTs) in myeloid cells. In eosinophils, triggers perinuclear arachidonate release and LTC4 synthesis in a PLA2G4A-independent way. In neutrophils, amplifies CysLTs biosynthesis initiated by PLA2G4A. Promotes immune complex clearance in macrophages via stimulating synthesis of CysLTs, which act through CYSLTR1 to trigger phagocytosis. May regulate antigen processing in antigen-presenting cells. In pulmonary macrophages regulates IL33 production required for activation of group 2 innate lymphoid cells. May play a role in the biosynthesis of N-acyl ethanolamines that regulate energy metabolism. Hydrolyzes N-acyl phosphatidylethanolamines to N-acyl lysophosphatidylethanolamines, which are further cleaved by a lysophospholipase D to release N-acyl ethanolamines. The chain is Phospholipase A2 group V (PLA2G5) from Homo sapiens (Human).